Consider the following 735-residue polypeptide: Ion-translocating oxidoreductase complex subunit C (735 aa).

4Fe-4S ferredoxin-type domains are found at residues 368–397 (MGAPQEEKSCIRCSACADACPADLLPQQLY) and 407–436 (KATAHHIADCIECGACAWVCPSNIPLVQYF). The [4Fe-4S] cluster site is built by Cys377, Cys380, Cys383, Cys387, Cys416, Cys419, Cys422, and Cys426. Positions 534-715 (QARAKQAAHP…AVDPRKAAVA (182 aa)) are disordered. Positions 666-689 (QQAGSEPAEPAAPRKAAVEAAIAR) are enriched in low complexity.

This sequence belongs to the 4Fe4S bacterial-type ferredoxin family. RnfC subfamily. In terms of assembly, the complex is composed of six subunits: RsxA, RsxB, RsxC, RsxD, RsxE and RsxG. [4Fe-4S] cluster serves as cofactor.

The protein localises to the cell inner membrane. Functionally, part of a membrane-bound complex that couples electron transfer with translocation of ions across the membrane. Required to maintain the reduced state of SoxR. In Salmonella paratyphi B (strain ATCC BAA-1250 / SPB7), this protein is Ion-translocating oxidoreductase complex subunit C.